The chain runs to 124 residues: UPF0235 protein (124 aa).

The segment at 1–22 (MTKKGSSNSSKQQQQQQQIIIN) is disordered.

It belongs to the UPF0235 family.

The sequence is that of UPF0235 protein from Dictyostelium discoideum (Social amoeba).